Consider the following 497-residue polypeptide: Tryptophan decarboxylase 2 (497 aa).

Ala-162, Ser-163, Thr-257, and Asn-311 together coordinate pyridoxal 5'-phosphate. Lys-314 carries the N6-(pyridoxal phosphate)lysine modification.

Belongs to the group II decarboxylase family. Pyridoxal 5'-phosphate is required as a cofactor.

It carries out the reaction L-tryptophan + H(+) = tryptamine + CO2. In terms of biological role, involved in serotonin biosynthesis. Catalyzes the decarboxylation of L-tryptophan to tryptamine, which is converted to serotonin by tryptamine 5-hydroxylase. May play a minor role in serotonin biosynthetis during senescence. Accumulation of serotonin attenuates leaf senescence. This Oryza sativa subsp. japonica (Rice) protein is Tryptophan decarboxylase 2.